The chain runs to 339 residues: Bifunctional protein GlmU (339 aa).

Residues 1–234 are pyrophosphorylase; the sequence is MKKENPLAIV…PKDVLGVNSR (234 aa). Residues 12–15, Lys-26, Gln-77, and 82–83 each bind UDP-N-acetyl-alpha-D-glucosamine; these read LAAG and GT. Residue Asp-107 participates in Mg(2+) binding. UDP-N-acetyl-alpha-D-glucosamine-binding residues include Gly-144, Glu-159, Asn-174, and Asn-232. Mg(2+) is bound at residue Asn-232. Residues 235–255 form a linker region; the sequence is IELAMADEELRMRRNREVMLT. An N-acetyltransferase region spans residues 256-339; it reads GVSMILPATI…KIPAQQREEE (84 aa).

Belongs to the N-acetylglucosamine-1-phosphate uridyltransferase family. Homotrimer. Mg(2+) serves as cofactor.

The protein resides in the cytoplasm. The catalysed reaction is alpha-D-glucosamine 1-phosphate + acetyl-CoA = N-acetyl-alpha-D-glucosamine 1-phosphate + CoA + H(+). The enzyme catalyses N-acetyl-alpha-D-glucosamine 1-phosphate + UTP + H(+) = UDP-N-acetyl-alpha-D-glucosamine + diphosphate. Its pathway is nucleotide-sugar biosynthesis; UDP-N-acetyl-alpha-D-glucosamine biosynthesis; N-acetyl-alpha-D-glucosamine 1-phosphate from alpha-D-glucosamine 6-phosphate (route II): step 2/2. It participates in nucleotide-sugar biosynthesis; UDP-N-acetyl-alpha-D-glucosamine biosynthesis; UDP-N-acetyl-alpha-D-glucosamine from N-acetyl-alpha-D-glucosamine 1-phosphate: step 1/1. The protein operates within bacterial outer membrane biogenesis; LPS lipid A biosynthesis. Its function is as follows. Catalyzes the last two sequential reactions in the de novo biosynthetic pathway for UDP-N-acetylglucosamine (UDP-GlcNAc). The C-terminal domain catalyzes the transfer of acetyl group from acetyl coenzyme A to glucosamine-1-phosphate (GlcN-1-P) to produce N-acetylglucosamine-1-phosphate (GlcNAc-1-P), which is converted into UDP-GlcNAc by the transfer of uridine 5-monophosphate (from uridine 5-triphosphate), a reaction catalyzed by the N-terminal domain. In Desulfotalea psychrophila (strain LSv54 / DSM 12343), this protein is Bifunctional protein GlmU (glmU).